A 294-amino-acid chain; its full sequence is Movement protein (294 aa).

As to quaternary structure, interacts with nucleoprotein.

Transports viral genome to neighboring plant cells directly through plasmosdesmata, without any budding. The movement protein allows efficient cell to cell propagation, by bypassing the host cell wall barrier. Displays an RNA-binding activity. The protein is Movement protein (3) of Rice yellow stunt virus (RYSV).